Reading from the N-terminus, the 521-residue chain is Cytochrome P450 monooxygenase bet2 (521 aa).

The helical transmembrane segment at 23-43 (SNWRFALFVAATLLTSYIVIV) threads the bilayer. Asn188 carries an N-linked (GlcNAc...) asparagine glycan. A heme-binding site is contributed by Cys461.

Belongs to the cytochrome P450 family. The cofactor is heme.

The protein resides in the membrane. The enzyme catalyses dehydroprobetaenone I + NADPH + O2 + H(+) = epoxybetaenone + NADP(+) + H2O. It carries out the reaction dehydroprobetaenone I + 3 NADPH + 3 O2 + 3 H(+) = betaenone C + 3 NADP(+) + 3 H2O. It functions in the pathway mycotoxin biosynthesis. Functionally, cytochrome P450 monooxygenase; part of the gene cluster that mediates the biosynthesis of betaenones, phytotoxic polyketides involved in leaf spot disease in sugar beets. The first step of the pathway is the synthesis of dehydroprobetaenone I by the polyketide synthase bet1 and the enoyl reductase bet3 via condensation of one acetyl-CoA starter unit with 7 malonyl-CoA units and 5 methylations. The C-terminal reductase (R) domain of bet1 catalyzes the reductive release of the polyketide chain. Because bet1 lacks a designated enoylreductase (ER) domain, the required activity is provided the enoyl reductase bet3. The short-chain dehydrogenase/reductase bet4 then catalyzes reduction of dehydroprobetaenone I to probetaenone I. The cytochrome P450 monooxygenase bet2 catalyzes successive epoxidation, oxidation (resulting from epoxide opening) and hydroxylation to install a tertiary alcohol in the decaline ring to yield betaenone C from dehydroprobetaenone I and betaenone B from probetaenone I. The FAD-linked oxidoreductase (orf1) is probably responsible for the conversion of betaenone C to betaenone A via an intramolecular aldol reaction between C-1 and C-17 to form the bridged tricyclic system in betaenone A. The polypeptide is Cytochrome P450 monooxygenase bet2 (Neocamarosporium betae (Beet black rot fungus)).